A 461-amino-acid polypeptide reads, in one-letter code: Transcription factor SOX-10 (461 aa).

Disordered regions lie at residues 1-60 (MADD…ADDD), 154-191 (LRMQHKKDHPDYKYQPRRRKNGKATQGEGEGQVEGEAG), 205-268 (LDHR…DFGN), 350-369 (KAQVKTEGSAPGGHYTDQPS), and 433-461 (AISDPAPSVPQSHSPTHWEQPVYTTLSRP). Residues 30-42 (ASDNSSHLASSGN) are compositionally biased toward polar residues. The dimerization (DIM) stretch occupies residues 56–96 (EADDDKFPVCIREAVSQVLSGYDWTLVPMPVRVNGSNKSKP). The segment at residues 98 to 166 (VKRPMNAFMV…QHKKDHPDYK (69 aa)) is a DNA-binding region (HMG box). Residues 154 to 167 (LRMQHKKDHPDYKY) show a composition bias toward basic and acidic residues. Residues 181–191 (EGEGQVEGEAG) show a composition bias toward gly residues. Residues 221–306 (PEHSSGQSHG…NGHAGHPGHV (86 aa)) are transactivation domain (TAM). Positions 247-264 (ADSKREGRSLGEGGKPHI) are enriched in basic and acidic residues. The segment at 350-461 (KAQVKTEGSA…QPVYTTLSRP (112 aa)) is transactivation domain (TAC). Positions 441-461 (VPQSHSPTHWEQPVYTTLSRP) are enriched in polar residues.

Its subcellular location is the cytoplasm. The protein resides in the nucleus. In terms of biological role, transcription factor that plays a central role in developing and mature glia. Specifically activates expression of myelin genes, during oligodendrocyte (OL) maturation, thereby playing a central role in oligodendrocyte maturation and CNS myelination. The polypeptide is Transcription factor SOX-10 (SOX10) (Gallus gallus (Chicken)).